A 227-amino-acid polypeptide reads, in one-letter code: PKHD-type hydroxylase Caul_0045 (227 aa).

One can recognise a Fe2OG dioxygenase domain in the interval 78 to 178; it reads TILSPLFNRY…RTASFFWIQS (101 aa). Fe cation-binding residues include H96, D98, and H159. Position 169 (R169) interacts with 2-oxoglutarate.

Fe(2+) is required as a cofactor. The cofactor is L-ascorbate.

The polypeptide is PKHD-type hydroxylase Caul_0045 (Caulobacter sp. (strain K31)).